The sequence spans 220 residues: Ribose-5-phosphate isomerase A (220 aa).

Substrate-binding positions include 28-31 (TGST), 81-84 (DGAD), and 94-97 (KGGG). The active-site Proton acceptor is glutamate 103. Lysine 121 is a binding site for substrate.

The protein belongs to the ribose 5-phosphate isomerase family. Homodimer.

The catalysed reaction is aldehydo-D-ribose 5-phosphate = D-ribulose 5-phosphate. It functions in the pathway carbohydrate degradation; pentose phosphate pathway; D-ribose 5-phosphate from D-ribulose 5-phosphate (non-oxidative stage): step 1/1. In terms of biological role, catalyzes the reversible conversion of ribose-5-phosphate to ribulose 5-phosphate. This chain is Ribose-5-phosphate isomerase A, found in Yersinia enterocolitica serotype O:8 / biotype 1B (strain NCTC 13174 / 8081).